Consider the following 228-residue polypeptide: uncharacterized protein (228 aa).

It belongs to the HAD-like hydrolase superfamily.

It is found in the cytoplasm. The protein resides in the nucleus. This is an uncharacterized protein from Schizosaccharomyces pombe (strain 972 / ATCC 24843) (Fission yeast).